We begin with the raw amino-acid sequence, 286 residues long: MAGGEHGVNGQHEETRAMEEGSRDHQARCENSEQDGGSKSSSNNHPMFSVQFAQKVIAEILGTFFLIFAGCAAVAVNKRTGGTVTFPGICITWGLAVMVMVYSVGHISGAHLNPAVTLAFATCGRFPWRRVPAYAAAQVAGSAAASAALRALFGGAPEHFFGTAPAGSDVQSLAMEFIITFYLMFVVSGVATDNRAIGELAGLAVGATVLVNVLFAGPISGASMNPARTIGPAIILGRYTGIWVYIAGPVFGAVAGAWAYNLIRFTDKPLREITMTASFIRSTRRN.

Residues 1 to 44 form a disordered region; that stretch reads MAGGEHGVNGQHEETRAMEEGSRDHQARCENSEQDGGSKSSSNN. Residues 11 to 31 show a composition bias toward basic and acidic residues; the sequence is QHEETRAMEEGSRDHQARCEN. Residues 34-44 show a composition bias toward polar residues; the sequence is QDGGSKSSSNN. 2 consecutive transmembrane segments (helical) span residues 56-76 and 84-104; these read VIAE…AVAV and VTFP…VYSV. Positions 113–115 match the NPA 1 motif; sequence NPA. Helical transmembrane passes span 131-153, 172-192, and 200-220; these read VPAY…RALF, SLAM…GVAT, and LAGL…GPIS. Positions 225 to 227 match the NPA 2 motif; the sequence is NPA. Residues 239–259 form a helical membrane-spanning segment; the sequence is YTGIWVYIAGPVFGAVAGAWA.

This sequence belongs to the MIP/aquaporin (TC 1.A.8) family. NIP (TC 1.A.8.12) subfamily.

Its subcellular location is the membrane. Its function is as follows. Aquaporins facilitate the transport of water and small neutral solutes across cell membranes. This is Aquaporin NIP1-3 (NIP1-3) from Oryza sativa subsp. japonica (Rice).